The primary structure comprises 245 residues: tRNA (guanine-N(1)-)-methyltransferase (245 aa).

Residues glycine 113 and 133-138 (IGDYVL) contribute to the S-adenosyl-L-methionine site.

Belongs to the RNA methyltransferase TrmD family. In terms of assembly, homodimer.

It localises to the cytoplasm. The catalysed reaction is guanosine(37) in tRNA + S-adenosyl-L-methionine = N(1)-methylguanosine(37) in tRNA + S-adenosyl-L-homocysteine + H(+). Specifically methylates guanosine-37 in various tRNAs. This chain is tRNA (guanine-N(1)-)-methyltransferase, found in Histophilus somni (strain 129Pt) (Haemophilus somnus).